The following is a 1342-amino-acid chain: MSQEYTEDKEVTLTKLSSGRRLLEALLILIVLFAVWLMAALLSFNPSDPSWSQTAWHEPIHNLGGMPGAWLADTLFFIFGVMAYTIPVIIVGGCWFAWRHQSSDEYIDYFAVSLRIIGVLALILTSCGLAAINADDIWYFASGGVIGSLLSTTLQPLLHSSGGTIALLCVWAAGLTLFTGWSWVTIAEKLGGWILNILTFASNRTRRDDTWVDEDEYEDDEEYEDENHGKQHESRRARILRGALARRKRLAEKFINPMGRQTDAALFSGKRMDDDEEITYTARGVAADPDDVLFSGNRATQPEYDEYDPLLNSAPITEPVAVAAAATTATQSWAAPVEPVTQTPPVASVDVPPSQPTVAWQPVPGPQTGEPVIAPAPEGYPQQSQYAQPAVQYNEPLQQPVQPQQPYYAPAAEQPAQQPYYAPAPEQPVAGNAWQAEEQQSTFAPQSTYQTEQTYQQPAAQEPLYQQPQPVEQQPVVEPEPVVEETKPARPPLYYFEEVEEKRAREREQLAAWYQPIPEPVKEPEPIKSSLKAPSVAAVPPVEAAAAVSPLASGVKKATLATGAAATVAAPVFSLANSGGPRPQVKEGIGPQLPRPKRIRVPTRRELASYGIKLPSQRAAEEKAREAQRNQYDSGDQYNDDEIDAMQQDELARQFAQTQQQRYGEQYQHDVPVNAEDADAAAEAELARQFAQTQQQRYSGEQPAGANPFSLDDFEFSPMKALLDDGPHEPLFTPIVEPVQQPQQPVAPQQQYQQPQQPVAPQQQYQQPQQQVAPQPQYQQPQQPVAPQQQYQQPQQPVAPQPQYQQPQQPVAPQPQYQQPQQPVAPQPQDTLLHPLLMRNGDSRPLHKPTTPLPSLDLLTPPPSEVEPVDTFALEQMARLVEARLADFRIKADVVNYSPGPVITRFELNLAPGVKAARISNLSRDLARSLSTVAVRVVEVIPGKPYVGLELPNKKRQTVYLREVLDNAKFRDNPSPLTVVLGKDIAGEPVVADLAKMPHLLVAGTTGSGKSVGVNAMILSMLYKAQPEDVRFIMIDPKMLELSVYEGIPHLLTEVVTDMKDAANALRWCVNEMERRYKLMSALGVRNLAGYNEKIAEADRMMRPIPDPYWKPGDSMDAQHPVLKKEPYIVVLVDEFADLMMTVGKKVEELIARLAQKARAAGIHLVLATQRPSVDVITGLIKANIPTRIAFTVSSKIDSRTILDQAGAESLLGMGDMLYSGPNSTLPVRVHGAFVRDQEVHAVVQDWKARGRPQYVDGITSDSESEGGAGGFDGAEELDPLFDQAVQFVTEKRKASISGVQRQFRIGYNRAARIIEQMEAQGIVSEQGHNGNREVLAPPPFD.

At 1-24 the chain is on the cytoplasmic side; the sequence is MSQEYTEDKEVTLTKLSSGRRLLE. Residues 25–44 traverse the membrane as a helical segment; sequence ALLILIVLFAVWLMAALLSF. Residues 45-74 lie on the Periplasmic side of the membrane; that stretch reads NPSDPSWSQTAWHEPIHNLGGMPGAWLADT. The chain crosses the membrane as a helical span at residues 75–98; it reads LFFIFGVMAYTIPVIIVGGCWFAW. Over 99–115 the chain is Cytoplasmic; the sequence is RHQSSDEYIDYFAVSLR. Residues 116 to 132 form a helical membrane-spanning segment; the sequence is IIGVLALILTSCGLAAI. The Periplasmic segment spans residues 133-162; the sequence is NADDIWYFASGGVIGSLLSTTLQPLLHSSG. The helical transmembrane segment at 163 to 179 threads the bilayer; sequence GTIALLCVWAAGLTLFT. Topologically, residues 180-1342 are cytoplasmic; the sequence is GWSWVTIAEK…REVLAPPPFD (1163 aa). Disordered regions lie at residues 346 to 386, 409 to 489, 604 to 639, 688 to 712, and 741 to 862; these read VASV…QSQY, APAA…TKPA, RRELASYGIKLPSQRAAEEKAREAQRNQYDSGDQYN, RQFAQTQQQRYSGEQPAGANPFSLD, and QPQQ…LTPP. Residues 409 to 430 are compositionally biased toward low complexity; it reads APAAEQPAQQPYYAPAPEQPVA. Residues 437–448 show a composition bias toward polar residues; sequence EEQQSTFAPQST. Residues 449 to 480 show a composition bias toward low complexity; the sequence is YQTEQTYQQPAAQEPLYQQPQPVEQQPVVEPE. Positions 619-628 are enriched in basic and acidic residues; sequence AAEEKAREAQ. A compositionally biased stretch (polar residues) spans 690-699; sequence FAQTQQQRYS. 2 stretches are compositionally biased toward low complexity: residues 741–829 and 849–859; these read QPQQ…PQPQ and PTTPLPSLDLL. In terms of domain architecture, FtsK spans 987–1200; the sequence is GEPVVADLAK…FTVSSKIDSR (214 aa). 1007–1012 is a binding site for ATP; it reads GSGKSV.

The protein belongs to the FtsK/SpoIIIE/SftA family. Homohexamer. Forms a ring that surrounds DNA.

It is found in the cell inner membrane. Functionally, essential cell division protein that coordinates cell division and chromosome segregation. The N-terminus is involved in assembly of the cell-division machinery. The C-terminus functions as a DNA motor that moves dsDNA in an ATP-dependent manner towards the dif recombination site, which is located within the replication terminus region. Translocation stops specifically at Xer-dif sites, where FtsK interacts with the Xer recombinase, allowing activation of chromosome unlinking by recombination. FtsK orienting polar sequences (KOPS) guide the direction of DNA translocation. FtsK can remove proteins from DNA as it translocates, but translocation stops specifically at XerCD-dif site, thereby preventing removal of XerC and XerD from dif. In Shigella flexneri, this protein is DNA translocase FtsK (ftsK).